Reading from the N-terminus, the 938-residue chain is Protein translocase subunit SecA 1 (938 aa).

ATP is bound by residues Gln84, 102-106, and Asp491; that span reads GEGKT. The segment at 865 to 938 is disordered; that stretch reads QTGGVATKER…QKTGRHAKRR (74 aa). The span at 918–927 shows a compositional bias: basic and acidic residues; it reads TRKERREAAR.

The protein belongs to the SecA family. As to quaternary structure, monomer and homodimer. Part of the essential Sec protein translocation apparatus which comprises SecA, SecYEG and auxiliary proteins SecDF. Other proteins may also be involved.

The protein localises to the cell membrane. It is found in the cytoplasm. The catalysed reaction is ATP + H2O + cellular proteinSide 1 = ADP + phosphate + cellular proteinSide 2.. Functionally, part of the Sec protein translocase complex. Interacts with the SecYEG preprotein conducting channel. Has a central role in coupling the hydrolysis of ATP to the transfer of proteins into and across the cell membrane, serving as an ATP-driven molecular motor driving the stepwise translocation of polypeptide chains across the membrane. The protein is Protein translocase subunit SecA 1 of Mycolicibacterium vanbaalenii (strain DSM 7251 / JCM 13017 / BCRC 16820 / KCTC 9966 / NRRL B-24157 / PYR-1) (Mycobacterium vanbaalenii).